The following is a 448-amino-acid chain: SVP1-like protein 2 (448 aa).

Residues asparagine 61, asparagine 155, asparagine 256, asparagine 280, asparagine 315, and asparagine 421 are each glycosylated (N-linked (GlcNAc...) asparagine). WD repeat units follow at residues 222 to 262 (AHKN…LIKE) and 267 to 306 (VDKA…NTET). The tract at residues 416-435 (THYSLNESLRNEDTKSAGEP) is disordered. The span at 424 to 435 (LRNEDTKSAGEP) shows a compositional bias: basic and acidic residues.

It belongs to the WD repeat PROPPIN family. In terms of processing, N-glycosylated.

The protein localises to the endosome membrane. The protein resides in the prevacuolar compartment membrane. Functionally, involved in piecemeal microautophagy of the nucleus (micronucleophagy). The sequence is that of SVP1-like protein 2 (HSV2) from Saccharomyces cerevisiae (strain ATCC 204508 / S288c) (Baker's yeast).